Consider the following 76-residue polypeptide: Conotoxin ArMKLT2-032 (76 aa).

An N-terminal signal peptide occupies residues Met-1 to Gly-22. A propeptide spanning residues Glu-23–Arg-46 is cleaved from the precursor. Residue Gln-47 is modified to Pyrrolidone carboxylic acid. 3 cysteine pairs are disulfide-bonded: Cys-48–Cys-62, Cys-55–Cys-66, and Cys-61–Cys-73.

The protein belongs to the conotoxin O1 superfamily. As to expression, expressed by the venom duct.

The protein localises to the secreted. The polypeptide is Conotoxin ArMKLT2-032 (Conus arenatus (Sand-dusted cone)).